The primary structure comprises 817 residues: Coiled-coil domain-containing protein 175 (817 aa).

Coiled coils occupy residues 130-166 (ILEI…ALGI) and 217-594 (LQDA…KQEE). The segment at 761 to 817 (EEESPSSLSKEDLQKAGMKQKEEKTLRFSPSLHTRRDTLSRNCKMIKKRSRSPKNKP) is disordered. Positions 769-786 (SKEDLQKAGMKQKEEKTL) are enriched in basic and acidic residues. Basic residues predominate over residues 804–817 (KMIKKRSRSPKNKP).

The protein is Coiled-coil domain-containing protein 175 (Ccdc175) of Rattus norvegicus (Rat).